Here is a 102-residue protein sequence, read N- to C-terminus: Small ribosomal subunit protein uS10 (102 aa).

Belongs to the universal ribosomal protein uS10 family. Part of the 30S ribosomal subunit.

In terms of biological role, involved in the binding of tRNA to the ribosomes. This chain is Small ribosomal subunit protein uS10, found in Nitrosomonas eutropha (strain DSM 101675 / C91 / Nm57).